Here is a 469-residue protein sequence, read N- to C-terminus: Glutamate--tRNA ligase 1 (469 aa).

The 'HIGH' region signature appears at 10-20 (PSPTGYLHIGG). Cys-99, Cys-101, Cys-126, and Asp-128 together coordinate Zn(2+). The 'KMSKS' region signature appears at 237–241 (RLSKR). ATP is bound at residue Lys-240.

Belongs to the class-I aminoacyl-tRNA synthetase family. Glutamate--tRNA ligase type 1 subfamily. In terms of assembly, monomer. The cofactor is Zn(2+).

It is found in the cytoplasm. It carries out the reaction tRNA(Glu) + L-glutamate + ATP = L-glutamyl-tRNA(Glu) + AMP + diphosphate. Its function is as follows. Catalyzes the attachment of glutamate to tRNA(Glu) in a two-step reaction: glutamate is first activated by ATP to form Glu-AMP and then transferred to the acceptor end of tRNA(Glu). The sequence is that of Glutamate--tRNA ligase 1 from Coxiella burnetii (strain RSA 331 / Henzerling II).